The chain runs to 92 residues: Small ribosomal subunit protein uS19c (92 aa).

Belongs to the universal ribosomal protein uS19 family.

Its subcellular location is the plastid. The protein resides in the chloroplast. Protein S19 forms a complex with S13 that binds strongly to the 16S ribosomal RNA. This Oltmannsiellopsis viridis (Marine flagellate) protein is Small ribosomal subunit protein uS19c.